Here is a 210-residue protein sequence, read N- to C-terminus: Phosphoheptose isomerase (210 aa).

One can recognise an SIS domain in the interval 38 to 202; that stretch reads IAACLARGGK…ENVAALAPYL (165 aa). 53-55 provides a ligand contact to substrate; sequence NGG. Zn(2+)-binding residues include H62 and E66. Substrate is bound by residues E66, 95–96, 121–123, S126, and Q173; these read ND and STS. Q173 and H181 together coordinate Zn(2+).

The protein belongs to the SIS family. GmhA subfamily. Homotetramer. Zn(2+) serves as cofactor.

It localises to the cytoplasm. It carries out the reaction 2 D-sedoheptulose 7-phosphate = D-glycero-alpha-D-manno-heptose 7-phosphate + D-glycero-beta-D-manno-heptose 7-phosphate. It participates in carbohydrate biosynthesis; D-glycero-D-manno-heptose 7-phosphate biosynthesis; D-glycero-alpha-D-manno-heptose 7-phosphate and D-glycero-beta-D-manno-heptose 7-phosphate from sedoheptulose 7-phosphate: step 1/1. In terms of biological role, catalyzes the isomerization of sedoheptulose 7-phosphate in D-glycero-D-manno-heptose 7-phosphate. The protein is Phosphoheptose isomerase of Desulfovibrio desulfuricans (strain ATCC 27774 / DSM 6949 / MB).